A 1067-amino-acid polypeptide reads, in one-letter code: Probable isoleucine--tRNA ligase, cytoplasmic (1067 aa).

The 'HIGH' region signature appears at 47 to 57; the sequence is PFATGLPHYGH. The short motif at 604–608 is the 'KMSKS' region element; sequence KMSKR. K607 is a binding site for ATP.

Belongs to the class-I aminoacyl-tRNA synthetase family.

Its subcellular location is the cytoplasm. It catalyses the reaction tRNA(Ile) + L-isoleucine + ATP = L-isoleucyl-tRNA(Ile) + AMP + diphosphate. This Dictyostelium discoideum (Social amoeba) protein is Probable isoleucine--tRNA ligase, cytoplasmic (ileS).